The sequence spans 336 residues: tRNA N6-adenosine threonylcarbamoyltransferase (336 aa).

The Fe cation site is built by histidine 114 and histidine 118. Residues 136–140 (LVSGG), aspartate 169, glycine 182, aspartate 186, and asparagine 275 contribute to the substrate site. Residue aspartate 301 coordinates Fe cation.

Belongs to the KAE1 / TsaD family. Fe(2+) serves as cofactor.

It localises to the cytoplasm. It carries out the reaction L-threonylcarbamoyladenylate + adenosine(37) in tRNA = N(6)-L-threonylcarbamoyladenosine(37) in tRNA + AMP + H(+). Required for the formation of a threonylcarbamoyl group on adenosine at position 37 (t(6)A37) in tRNAs that read codons beginning with adenine. Is involved in the transfer of the threonylcarbamoyl moiety of threonylcarbamoyl-AMP (TC-AMP) to the N6 group of A37, together with TsaE and TsaB. TsaD likely plays a direct catalytic role in this reaction. The protein is tRNA N6-adenosine threonylcarbamoyltransferase of Streptococcus pneumoniae (strain Hungary19A-6).